The primary structure comprises 115 residues: Small ribosomal subunit protein bS18c (115 aa).

Residues 91-115 (TNALKARTQNKDQKKEKFQINKKKK) form a disordered region. Positions 99 to 109 (QNKDQKKEKFQ) are enriched in basic and acidic residues.

This sequence belongs to the bacterial ribosomal protein bS18 family. As to quaternary structure, part of the 30S ribosomal subunit.

The protein resides in the plastid. Its subcellular location is the chloroplast. This chain is Small ribosomal subunit protein bS18c, found in Ipomoea purpurea (Common morning glory).